The chain runs to 281 residues: 4-diphosphocytidyl-2-C-methyl-D-erythritol kinase (281 aa).

K15 is an active-site residue. Position 98–108 (P98–S108) interacts with ATP. D140 is a catalytic residue.

The protein belongs to the GHMP kinase family. IspE subfamily.

It carries out the reaction 4-CDP-2-C-methyl-D-erythritol + ATP = 4-CDP-2-C-methyl-D-erythritol 2-phosphate + ADP + H(+). It participates in isoprenoid biosynthesis; isopentenyl diphosphate biosynthesis via DXP pathway; isopentenyl diphosphate from 1-deoxy-D-xylulose 5-phosphate: step 3/6. Functionally, catalyzes the phosphorylation of the position 2 hydroxy group of 4-diphosphocytidyl-2C-methyl-D-erythritol. In Neisseria meningitidis serogroup B (strain ATCC BAA-335 / MC58), this protein is 4-diphosphocytidyl-2-C-methyl-D-erythritol kinase.